The following is a 149-amino-acid chain: Nucleoside diphosphate kinase 1 (149 aa).

ATP contacts are provided by lysine 9, phenylalanine 57, arginine 85, threonine 91, arginine 102, and asparagine 112. The active-site Pros-phosphohistidine intermediate is the histidine 115.

Belongs to the NDK family. In terms of assembly, homohexamer. Mg(2+) serves as cofactor.

The enzyme catalyses a 2'-deoxyribonucleoside 5'-diphosphate + ATP = a 2'-deoxyribonucleoside 5'-triphosphate + ADP. It carries out the reaction a ribonucleoside 5'-diphosphate + ATP = a ribonucleoside 5'-triphosphate + ADP. Functionally, major role in the synthesis of nucleoside triphosphates other than ATP. The ATP gamma phosphate is transferred to the NDP beta phosphate via a ping-pong mechanism, using a phosphorylated active-site intermediate. This NDK is microtubule-associated. The protein is Nucleoside diphosphate kinase 1 (NDKR) of Oryza sativa subsp. japonica (Rice).